A 392-amino-acid chain; its full sequence is Phosphoglycerate kinase (392 aa).

Substrate is bound by residues 21-23, R36, 59-62, R113, and R146; these read DFN and HLGR. ATP contacts are provided by residues K197, E319, and 345–348; that span reads GGDT.

It belongs to the phosphoglycerate kinase family. Monomer.

The protein localises to the cytoplasm. The enzyme catalyses (2R)-3-phosphoglycerate + ATP = (2R)-3-phospho-glyceroyl phosphate + ADP. The protein operates within carbohydrate degradation; glycolysis; pyruvate from D-glyceraldehyde 3-phosphate: step 2/5. This chain is Phosphoglycerate kinase, found in Francisella tularensis subsp. holarctica (strain FTNF002-00 / FTA).